The primary structure comprises 296 residues: Phosphatidylglycerol--prolipoprotein diacylglyceryl transferase (296 aa).

Helical transmembrane passes span 10 to 30 (IAFS…LAAF), 57 to 77 (LLFY…MLFY), 92 to 112 (VWEG…ACWL), and 119 to 139 (LHFF…LGFG). R140 provides a ligand contact to a 1,2-diacyl-sn-glycero-3-phospho-(1'-sn-glycerol). 3 helical membrane passes run 194–214 (QLYE…TFSM), 220–240 (YALS…VEFV), and 254–274 (WLTM…ALLA).

This sequence belongs to the Lgt family.

It localises to the cell inner membrane. The enzyme catalyses L-cysteinyl-[prolipoprotein] + a 1,2-diacyl-sn-glycero-3-phospho-(1'-sn-glycerol) = an S-1,2-diacyl-sn-glyceryl-L-cysteinyl-[prolipoprotein] + sn-glycerol 1-phosphate + H(+). Its pathway is protein modification; lipoprotein biosynthesis (diacylglyceryl transfer). Its function is as follows. Catalyzes the transfer of the diacylglyceryl group from phosphatidylglycerol to the sulfhydryl group of the N-terminal cysteine of a prolipoprotein, the first step in the formation of mature lipoproteins. The sequence is that of Phosphatidylglycerol--prolipoprotein diacylglyceryl transferase from Xanthomonas oryzae pv. oryzae (strain MAFF 311018).